The primary structure comprises 178 residues: Cytochrome b6-f complex iron-sulfur subunit (178 aa).

A helical membrane pass occupies residues 20 to 42 (LLTFGSVTGVALGALYPVVNYFI). In terms of domain architecture, Rieske spans 65 to 161 (ATGWLSSHPE…VSVENDNVFV (97 aa)). Cys107, His109, Cys125, and His128 together coordinate [2Fe-2S] cluster. Cys112 and Cys127 are oxidised to a cystine.

The protein belongs to the Rieske iron-sulfur protein family. As to quaternary structure, the 4 large subunits of the cytochrome b6-f complex are cytochrome b6, subunit IV (17 kDa polypeptide, PetD), cytochrome f and the Rieske protein, while the 4 small subunits are PetG, PetL, PetM and PetN. The complex functions as a dimer. [2Fe-2S] cluster is required as a cofactor.

It localises to the cellular thylakoid membrane. The catalysed reaction is 2 oxidized [plastocyanin] + a plastoquinol + 2 H(+)(in) = 2 reduced [plastocyanin] + a plastoquinone + 4 H(+)(out). In terms of biological role, component of the cytochrome b6-f complex, which mediates electron transfer between photosystem II (PSII) and photosystem I (PSI), cyclic electron flow around PSI, and state transitions. The polypeptide is Cytochrome b6-f complex iron-sulfur subunit (Parasynechococcus marenigrum (strain WH8102)).